A 341-amino-acid chain; its full sequence is 2-dehydro-3-deoxy-L-galactonate 5-dehydrogenase (341 aa).

C37 is a Zn(2+) binding site. Residues T39 and H42 each act as charge relay system in the active site. Residues H60, E61, C90, C93, C96, and C104 each coordinate Zn(2+).

This sequence belongs to the zinc-containing alcohol dehydrogenase family. The cofactor is Zn(2+).

It carries out the reaction 2-dehydro-3-deoxy-L-galactonate + NAD(+) = 3-deoxy-D-glycero-2,5-hexodiulosonate + NADH + H(+). Involved in the degradation of 3,6-anhydro-L-galactose, which is the major monomeric sugar of red macroalgae. Catalyzes the third step of the pathway, the NAD(+)-dependent oxidation of 2-dehydro-3-deoxy-L-galactonate (L-KDGal) to 3-deoxy-D-glycero-2,5-hexodiulosonate (L-DDGal). The polypeptide is 2-dehydro-3-deoxy-L-galactonate 5-dehydrogenase (Pseudoalteromonas atlantica (strain T6c / ATCC BAA-1087)).